A 295-amino-acid polypeptide reads, in one-letter code: MKTVARALSGSARAMARKPMRFTDLRTVQLRPPIVPTHRNFEVSPDHPLWAFFPDGNNSQTCYREASDLDIQSRAWTTAELRRKSFEDLHQLWYLVLKERNVLAREVRLADAINERNTHVHDQVDEKLLLTQKRIKQVLLERQTAFERVQTFTQQQQEYLEEFRQRYLDADASQIASYNEKLIRLQYAFFGIQPQLEDYNWETDINERFVDGLNYVSHIKLARYFAQNPDVEEEIGYPLKGVVEELPFLLRDPSEAVEEVRALRQSGAQVKLDKIDVLPFLRSALQAALEQEGRM.

It belongs to the universal ribosomal protein uL29 family. In terms of assembly, component of the mitochondrial large ribosomal subunit. Mature mitochondrial ribosomes consist of a small (37S) and a large (54S) subunit. The 37S subunit contains at least 33 different proteins and 1 molecule of RNA (15S). The 54S subunit contains at least 45 different proteins and 1 molecule of RNA (21S).

Its subcellular location is the mitochondrion. The polypeptide is Large ribosomal subunit protein uL29m (MRPL4) (Meyerozyma guilliermondii (strain ATCC 6260 / CBS 566 / DSM 6381 / JCM 1539 / NBRC 10279 / NRRL Y-324) (Yeast)).